The following is a 97-amino-acid chain: Aspartyl/glutamyl-tRNA(Asn/Gln) amidotransferase subunit C (97 aa).

It belongs to the GatC family. Heterotrimer of A, B and C subunits.

It carries out the reaction L-glutamyl-tRNA(Gln) + L-glutamine + ATP + H2O = L-glutaminyl-tRNA(Gln) + L-glutamate + ADP + phosphate + H(+). The catalysed reaction is L-aspartyl-tRNA(Asn) + L-glutamine + ATP + H2O = L-asparaginyl-tRNA(Asn) + L-glutamate + ADP + phosphate + 2 H(+). Functionally, allows the formation of correctly charged Asn-tRNA(Asn) or Gln-tRNA(Gln) through the transamidation of misacylated Asp-tRNA(Asn) or Glu-tRNA(Gln) in organisms which lack either or both of asparaginyl-tRNA or glutaminyl-tRNA synthetases. The reaction takes place in the presence of glutamine and ATP through an activated phospho-Asp-tRNA(Asn) or phospho-Glu-tRNA(Gln). The protein is Aspartyl/glutamyl-tRNA(Asn/Gln) amidotransferase subunit C of Prochlorococcus marinus (strain MIT 9303).